Consider the following 585-residue polypeptide: Glutamate decarboxylase 2 (585 aa).

Positions 1–25 are disordered; sequence MASPGSGFWSFGSEDGSGDPENPGT. Residues Ser-3, Ser-6, Ser-10, Ser-13, and Ser-17 each carry the phosphoserine modification. Residues Cys-30 and Cys-45 are each lipidated (S-palmitoyl cysteine). 181–183 serves as a coordination point for substrate; it reads QLS. At Lys-396 the chain carries N6-(pyridoxal phosphate)lysine. Arg-558 contributes to the substrate binding site.

Belongs to the group II decarboxylase family. Homodimer. Requires pyridoxal 5'-phosphate as cofactor. The N-terminus is blocked. In terms of processing, phosphorylated; which does not affect kinetic parameters or subcellular location. Post-translationally, palmitoylated; which is required for presynaptic clustering.

The protein resides in the cytoplasm. The protein localises to the cytosol. Its subcellular location is the cytoplasmic vesicle. It is found in the presynaptic cell membrane. It localises to the golgi apparatus membrane. It catalyses the reaction L-glutamate + H(+) = 4-aminobutanoate + CO2. Functionally, catalyzes the production of GABA. The sequence is that of Glutamate decarboxylase 2 (Gad2) from Rattus norvegicus (Rat).